The sequence spans 478 residues: 3-isopropylmalate dehydratase large subunit (478 aa).

C347, C407, and C410 together coordinate [4Fe-4S] cluster.

Belongs to the aconitase/IPM isomerase family. LeuC type 1 subfamily. As to quaternary structure, heterodimer of LeuC and LeuD. The cofactor is [4Fe-4S] cluster.

It carries out the reaction (2R,3S)-3-isopropylmalate = (2S)-2-isopropylmalate. It participates in amino-acid biosynthesis; L-leucine biosynthesis; L-leucine from 3-methyl-2-oxobutanoate: step 2/4. Functionally, catalyzes the isomerization between 2-isopropylmalate and 3-isopropylmalate, via the formation of 2-isopropylmaleate. This chain is 3-isopropylmalate dehydratase large subunit, found in Prochlorococcus marinus (strain MIT 9313).